Consider the following 201-residue polypeptide: ATP-dependent Clp protease proteolytic subunit (201 aa).

The active-site Nucleophile is Ser-101. His-126 is an active-site residue.

This sequence belongs to the peptidase S14 family. Component of the chloroplastic Clp protease core complex.

Its subcellular location is the plastid. It localises to the chloroplast stroma. It carries out the reaction Hydrolysis of proteins to small peptides in the presence of ATP and magnesium. alpha-casein is the usual test substrate. In the absence of ATP, only oligopeptides shorter than five residues are hydrolyzed (such as succinyl-Leu-Tyr-|-NHMec, and Leu-Tyr-Leu-|-Tyr-Trp, in which cleavage of the -Tyr-|-Leu- and -Tyr-|-Trp bonds also occurs).. In terms of biological role, cleaves peptides in various proteins in a process that requires ATP hydrolysis. Has a chymotrypsin-like activity. Plays a major role in the degradation of misfolded proteins. The polypeptide is ATP-dependent Clp protease proteolytic subunit (Chlorella vulgaris (Green alga)).